Here is a 377-residue protein sequence, read N- to C-terminus: Flagellin D (377 aa).

Coiled-coil stretches lie at residues 103-129 and 310-339; these read SNSKSERVAIQEEITALNDELNRIAET and AFQNRFNHAISNLDNINENVNASKSRIKDT.

Belongs to the bacterial flagellin family. In terms of assembly, heteromer of multiple flagellin subunits including FlaA, FlaB, FlaC, FlaD and FlaE.

The protein localises to the secreted. Its subcellular location is the bacterial flagellum. Flagellin is the subunit protein which polymerizes to form the filaments of bacterial flagella. FlaD is not essential for flagellar synthesis and motility. The polypeptide is Flagellin D (flaD) (Vibrio cholerae serotype O1 (strain ATCC 39315 / El Tor Inaba N16961)).